The chain runs to 212 residues: Secreted and transmembrane protein 1b (212 aa).

An N-terminal signal peptide occupies residues 1–28; that stretch reads MLAYSVTSSGLFPRMLWALLLLAASLNA. The Extracellular portion of the chain corresponds to 29-160; that stretch reads HNDVWDEPCC…DKPPTAVRTE (132 aa). Residues Cys-38 and Cys-55 are joined by a disulfide bond. N-linked (GlcNAc...) asparagine glycosylation is found at Asn-56, Asn-85, Asn-114, and Asn-130. Residues 161-181 traverse the membrane as a helical segment; sequence VIIIIAIATTIIITGIGVFVW. Over 182–212 the chain is Cytoplasmic; that stretch reads YKQFPVAPQIQMSVPCLIHGSPGIPYLTLPP.

Belongs to the SECTM family. As to quaternary structure, interacts with CD7.

The protein resides in the cell membrane. The protein localises to the secreted. Functionally, may be involved in thymocyte signaling. This Mus musculus (Mouse) protein is Secreted and transmembrane protein 1b (Sectm1b).